Reading from the N-terminus, the 690-residue chain is ATP-dependent DNA helicase Hel308 (690 aa).

ATP-binding positions include Gln26 and 45 to 52 (IPTASGKT). One can recognise a Helicase ATP-binding domain in the interval 32–188 (AGYLESEDNY…WLDARVVEHD (157 aa)). The DEAH box signature appears at 133–136 (DEFH). The Helicase C-terminal domain occupies 208 to 417 (EKNDVVLKVL…NRDALYRQII (210 aa)).

This sequence belongs to the helicase family. Hel308 subfamily. As to quaternary structure, monomer. Binds replication protein A (RPA), in presence and absence of DNA.

The enzyme catalyses Couples ATP hydrolysis with the unwinding of duplex DNA by translocating in the 3'-5' direction.. The catalysed reaction is ATP + H2O = ADP + phosphate + H(+). In terms of biological role, DNA-dependent ATPase and 3'-5' DNA helicase that may be involved in repair of stalled replication forks. Helicase with 3'-to 5'- polarity; able to unwind over 100 bp of DNA at 50 degrees Celsius. Unwinds forked DNA, preferentially on lagging strand forks; has weaker activity on Holliday junctions. Displaces the invading strand in DNA D-loops. Unwinds short oligonucleotides from dsDNA with 3'- but not blunt ends or 5'-ssDNA tails in an ATP-dependent manner. ATPase activity is stimulated by ssDNA but not dsDNA, protein binds ssDNA, dsDNA with 5'- or 3'-overhangs but not blunt ended dsDNA and replication forks. Replication forks bind both this protein and RPA. RPA does not stimulate the helicase activity of this protein. In Methanothermobacter thermautotrophicus (strain ATCC 29096 / DSM 1053 / JCM 10044 / NBRC 100330 / Delta H) (Methanobacterium thermoautotrophicum), this protein is ATP-dependent DNA helicase Hel308.